Consider the following 207-residue polypeptide: MGKGTLYIVSAPSGAGKSSLIAALLEQNPTYAMKVSVSHTTRGMRPGEQDGVHYHFVEKEHFIELIGKGEFLEYAEVFGNYYGTSRVWIENTLNKGIDVFLDIDWQGARQIRSQMPEAKSIFILPPSKEELERRLNTRGQDSDAVIAKRMGEAKSEISHYSEYDYVIINDDFDVALMDFKAIIRAERLKQDKQAAKYSAMLSALLAE.

The Guanylate kinase-like domain occupies glycine 4 to arginine 184. Residue alanine 11–serine 18 participates in ATP binding.

This sequence belongs to the guanylate kinase family.

Its subcellular location is the cytoplasm. The enzyme catalyses GMP + ATP = GDP + ADP. It catalyses the reaction dZMP + ATP = dZDP + ADP. The protein operates within purine metabolism. Functionally, essential for recycling GMP and indirectly, cGMP. (Microbial infection) Catalyzes the phosphorylation of dZMP to dZDP, when the bacterium is infected by a phage that produces the substrate for the synthesis of dZTP (2- amino-2'-deoxyadenosine 5'-triphosphate), which is then used by the phage as a DNA polymerase substrate. This chain is Guanylate kinase (gmk), found in Vibrio cholerae serotype O1 (strain ATCC 39315 / El Tor Inaba N16961).